Here is a 228-residue protein sequence, read N- to C-terminus: MSVKFQEEATRSIRADTKELAHKVGERLTGGNAQTGYLALYLRQLQSNPLRTKMLTSGLLSGLQEVLASWIANDVSKHGHYFSARVPKMTLYGMFISAPLGHLLVGILQKVFAGRTSLKAKILQILASNLIVSPIQNAVYLMSMAIIAGARTLHQVRATVKAGFMPVMKVSWITSPLALAFAQKFLPEHTWVPFFNIIGFFIGTYVNTHTKKKRLEALRKVQSTSRTK.

4 helical membrane passes run Met89–Gln109, Leu130–Ala150, Ala162–Ala182, and Phe185–Tyr205.

It belongs to the peroxisomal membrane protein PXMP2/4 family. Self-assembles into detergent-resistant oligomers and forms a complex with hexA assemblies.

It is found in the peroxisome membrane. The protein resides in the cell septum. Woronin sorting complex protein involved in both Woronin bodies (WB) formation and inherence. Localizes to large peroxisome membranes where it self-assembles into detergent-resistant oligomers that envelop hex-1 assemblies, producing asymmetrical nascent WBs. These structures are then delivered to the cell cortex, which permits partitioning of the nascent WB and WB inheritance. This Aspergillus fumigatus (strain ATCC MYA-4609 / CBS 101355 / FGSC A1100 / Af293) (Neosartorya fumigata) protein is Woronin body membrane protein wscA.